The following is a 102-amino-acid chain: snRNA-activating protein complex subunit 5 (102 aa).

Residues 73–82 (QTTLKLSTRS) show a composition bias toward polar residues. The segment at 73–102 (QTTLKLSTRSPMEEEEEEEEEEEEEEESDS) is disordered. Over residues 85-102 (EEEEEEEEEEEEEEESDS) the composition is skewed to acidic residues.

In terms of assembly, part of the SNAPc complex composed of 5 subunits: SNAPC1, SNAPC2, SNAPC3, SNAPC4 and SNAPC5. SNAPC5 interacts with SNAPC4.

The protein resides in the nucleus. Part of the SNAPc complex required for the transcription of both RNA polymerase II and III small-nuclear RNA genes. Binds to the proximal sequence element (PSE), a non-TATA-box basal promoter element common to these 2 types of genes. Recruits TBP and BRF2 to the U6 snRNA TATA box. The sequence is that of snRNA-activating protein complex subunit 5 from Mus musculus (Mouse).